A 157-amino-acid chain; its full sequence is Protein Smg (157 aa).

It belongs to the Smg family.

The sequence is that of Protein Smg from Sodalis glossinidius (strain morsitans).